The primary structure comprises 389 residues: Adenylyltransferase and sulfurtransferase uba4 (389 aa).

ATP is bound by residues glycine 40, aspartate 61, 68-72 (SNLHR), lysine 85, and 129-130 (DT). Cysteine 171 and cysteine 174 together coordinate Zn(2+). Residue cysteine 188 is the Glycyl thioester intermediate; for adenylyltransferase activity of the active site. 2 residues coordinate Zn(2+): cysteine 252 and cysteine 255. Positions 298 to 387 (AQRAPYLVDV…WSRQIDPNFP (90 aa)) constitute a Rhodanese domain. The active-site Cysteine persulfide intermediate is cysteine 347.

This sequence in the N-terminal section; belongs to the HesA/MoeB/ThiF family. UBA4 subfamily. The cofactor is Zn(2+).

It is found in the cytoplasm. The protein localises to the cytosol. The catalysed reaction is [molybdopterin-synthase sulfur-carrier protein]-C-terminal Gly-Gly + ATP + H(+) = [molybdopterin-synthase sulfur-carrier protein]-C-terminal Gly-Gly-AMP + diphosphate. It catalyses the reaction [molybdopterin-synthase sulfur-carrier protein]-C-terminal Gly-Gly-AMP + S-sulfanyl-L-cysteinyl-[cysteine desulfurase] + AH2 = [molybdopterin-synthase sulfur-carrier protein]-C-terminal-Gly-aminoethanethioate + L-cysteinyl-[cysteine desulfurase] + A + AMP + 2 H(+). Its pathway is tRNA modification; 5-methoxycarbonylmethyl-2-thiouridine-tRNA biosynthesis. The protein operates within cofactor biosynthesis; molybdopterin biosynthesis. Plays a central role in 2-thiolation of mcm(5)S(2)U at tRNA wobble positions of cytosolic tRNA(Lys), tRNA(Glu) and tRNA(Gln). Also essential during biosynthesis of the molybdenum cofactor. Acts by mediating the C-terminal thiocarboxylation of sulfur carriers URM1 and CNX5/MOCS2A. Its N-terminus first activates urm1 and mocs2a as acyl-adenylates (-COAMP), then the persulfide sulfur on the catalytic cysteine is transferred to URM1 and CNX5/MOCS2A to form thiocarboxylation (-COSH) of their C-terminus. The reaction probably involves hydrogen sulfide that is generated from the persulfide intermediate and that acts as a nucleophile towards URM1 and CNX5/MOCS2A. Subsequently, a transient disulfide bond is formed. Does not use thiosulfate as sulfur donor; NFS1 probably acting as a sulfur donor for thiocarboxylation reactions. Required for growth on nitrate as a sole nitrogen source. The protein is Adenylyltransferase and sulfurtransferase uba4 of Ogataea parapolymorpha (strain ATCC 26012 / BCRC 20466 / JCM 22074 / NRRL Y-7560 / DL-1) (Yeast).